The chain runs to 179 residues: Large ribosomal subunit protein uL5 (179 aa).

This sequence belongs to the universal ribosomal protein uL5 family. In terms of assembly, part of the 50S ribosomal subunit; part of the 5S rRNA/L5/L18/L25 subcomplex. Contacts the 5S rRNA and the P site tRNA. Forms a bridge to the 30S subunit in the 70S ribosome.

This is one of the proteins that bind and probably mediate the attachment of the 5S RNA into the large ribosomal subunit, where it forms part of the central protuberance. In the 70S ribosome it contacts protein S13 of the 30S subunit (bridge B1b), connecting the 2 subunits; this bridge is implicated in subunit movement. Contacts the P site tRNA; the 5S rRNA and some of its associated proteins might help stabilize positioning of ribosome-bound tRNAs. This Geobacter sp. (strain M21) protein is Large ribosomal subunit protein uL5.